Consider the following 379-residue polypeptide: Cytochrome b (379 aa).

4 consecutive transmembrane segments (helical) span residues 33–53, 77–98, 113–133, and 178–198; these read FGSL…FLAM, WLIR…YLHI, WNIG…GYVL, and FFAF…VHLL. Residues histidine 83 and histidine 97 each contribute to the heme b site. Heme b-binding residues include histidine 182 and histidine 196. Histidine 201 provides a ligand contact to a ubiquinone. The next 4 helical transmembrane spans lie at 226–246, 288–308, 320–340, and 347–367; these read TKDF…VLFF, MGGV…PHIQ, ISQF…WIGG, and FIII…AFLP.

It belongs to the cytochrome b family. The cytochrome bc1 complex contains 11 subunits: 3 respiratory subunits (MT-CYB, CYC1 and UQCRFS1), 2 core proteins (UQCRC1 and UQCRC2) and 6 low-molecular weight proteins (UQCRH/QCR6, UQCRB/QCR7, UQCRQ/QCR8, UQCR10/QCR9, UQCR11/QCR10 and a cleavage product of UQCRFS1). This cytochrome bc1 complex then forms a dimer. Requires heme b as cofactor.

It localises to the mitochondrion inner membrane. In terms of biological role, component of the ubiquinol-cytochrome c reductase complex (complex III or cytochrome b-c1 complex) that is part of the mitochondrial respiratory chain. The b-c1 complex mediates electron transfer from ubiquinol to cytochrome c. Contributes to the generation of a proton gradient across the mitochondrial membrane that is then used for ATP synthesis. This chain is Cytochrome b (MT-CYB), found in Dipodomys ordii (Ord's kangaroo rat).